Consider the following 450-residue polypeptide: Chitobiosyldiphosphodolichol beta-mannosyltransferase (450 aa).

At 1–13 the chain is on the lumenal side; it reads MSWIQIPWSWVVT. Residues 14–34 form a helical membrane-spanning segment; sequence LIVTYLSLPLIIYYLVPYIFY. The Cytoplasmic segment spans residues 35–106; sequence GNKSSKKRII…PTLTLQGNKR (72 aa). The helical intramembrane region spans 107-127; sequence SIIFLVKKVLFQVSAIIAQLW. Topologically, residues 128-450 are cytoplasmic; sequence ELRGSNYMLI…SAMQELKLVA (323 aa).

The protein belongs to the glycosyltransferase group 1 family.

It is found in the endoplasmic reticulum membrane. The catalysed reaction is an N,N'-diacetylchitobiosyl-diphospho-di-trans,poly-cis-dolichol + GDP-alpha-D-mannose = a beta-D-Man-(1-&gt;4)-beta-D-GlcNAc-(1-&gt;4)-alpha-D-GlcNAc-diphospho-di-trans,poly-cis-dolichol + GDP + H(+). It participates in protein modification; protein glycosylation. Functionally, participates in the formation of the lipid-linked precursor oligosaccharide for N-glycosylation. Involved in assembling the dolichol-pyrophosphate-GlcNAc(2)-Man(5) intermediate on the cytoplasmic surface of the ER. The chain is Chitobiosyldiphosphodolichol beta-mannosyltransferase (ALG1) from Candida glabrata (strain ATCC 2001 / BCRC 20586 / JCM 3761 / NBRC 0622 / NRRL Y-65 / CBS 138) (Yeast).